The chain runs to 427 residues: N-myc proto-oncogene protein (427 aa).

Disordered stretches follow at residues F45–L79, E144–A173, A195–K255, and A297–N349. 2 stretches are compositionally biased toward pro residues: residues P49 to G61 and A152 to P167. The span at R210–D221 shows a compositional bias: low complexity. Acidic residues predominate over residues T222–D242. A phosphoserine; by CK2 mark is found at S224 and S226. The bHLH domain occupies E343–L396. Residues L396 to L417 form a leucine-zipper region.

As to quaternary structure, efficient DNA binding requires dimerization with another bHLH protein. Binds DNA as a heterodimer with MAX.

The protein resides in the nucleus. The sequence is that of N-myc proto-oncogene protein (MYCN) from Serinus canaria (Island canary).